The primary structure comprises 144 residues: Large ribosomal subunit protein uL13 (144 aa).

The protein belongs to the universal ribosomal protein uL13 family. Part of the 50S ribosomal subunit.

Functionally, this protein is one of the early assembly proteins of the 50S ribosomal subunit, although it is not seen to bind rRNA by itself. It is important during the early stages of 50S assembly. The chain is Large ribosomal subunit protein uL13 from Clostridium perfringens (strain 13 / Type A).